A 348-amino-acid chain; its full sequence is Rhodopsin (348 aa).

An N-acetylmethionine modification is found at M1. Over 1–36 (MNGTEGPNFYVPFSNKTGVVRSPFEYPQYYLAEPWQ) the chain is Extracellular. N-linked (GlcNAc...) asparagine glycosylation is found at N2 and N15. Residues 37–61 (FSMLAAYMFLLIVLGFPINFLTLYV) traverse the membrane as a helical segment. Residues 62–73 (TVQHKKLRTPLN) are Cytoplasmic-facing. A helical membrane pass occupies residues 74 to 96 (YILLNLAVADLFMVFGGFTTTLY). Residues 97–110 (TSLHGYFVFGPTGC) are Extracellular-facing. Residues C110 and C187 are joined by a disulfide bond. The helical transmembrane segment at 111–133 (NVEGFFATLGGEIALWSLVVLAI) threads the bilayer. The 'Ionic lock' involved in activated form stabilization signature appears at 134 to 136 (ERY). Residues 134–152 (ERYVVVCKPMSNFRFGENH) lie on the Cytoplasmic side of the membrane. A helical membrane pass occupies residues 153-173 (AIMGVAFTWVMALACAAPPLA). Residues 174–202 (GWSRYIPEGMQCSCGIDYYTLKPEINNES) lie on the Extracellular side of the membrane. E201 contributes to the Zn(2+) binding site. A helical membrane pass occupies residues 203–224 (FVIYMFVVHFAIPMIVIFFCYG). Residues 225–252 (QLVFTVKEAAAQQQESATTQKAEKEVTR) lie on the Cytoplasmic side of the membrane. The chain crosses the membrane as a helical span at residues 253–274 (MVIIMVIAFLICWVPYASVAFY). The Extracellular segment spans residues 275-286 (IFTHQGSDFGPI). Q279 is a Zn(2+) binding site. A helical membrane pass occupies residues 287 to 308 (FMTLPAFFAKSSSIYNPVIYIM). Residue K296 is modified to N6-(retinylidene)lysine. The Cytoplasmic segment spans residues 309 to 348 (MNKQFRNCMITTLCCGKNPLGDDEASASASKTETSQVAPA). Residues C322 and C323 are each lipidated (S-palmitoyl cysteine). An interaction with SAG region spans residues 330-348 (DDEASASASKTETSQVAPA). S334 and S338 each carry phosphoserine. Phosphothreonine is present on residues T340 and T342. S343 carries the post-translational modification Phosphoserine.

Belongs to the G-protein coupled receptor 1 family. Opsin subfamily. In terms of assembly, homodimer. May form a complex composed of RHO, GRK1 and RCVRN in a Ca(2+)-dependent manner; RCVRN prevents the interaction between GRK1 and RHO. Interacts with GRK1. Interacts (phosphorylated form) with SAG. Interacts with GNAT1. Interacts with GNAT3. SAG and G-proteins compete for a common binding site. Interacts with PRCD; the interaction promotes PRCD stability. Forms a complex with ASAP1 and ARF4. Forms a complex with ASAP1, RAB11A, Rabin8/RAB3IP, ARF4 and RAB11FIP3; the complex regulates Golgi-to-cilia rhodopsin/RHO transport in photoreceptors. Phosphorylated on some or all of the serine and threonine residues present in the C-terminal region. In terms of processing, contains one covalently linked retinal chromophore. Upon light absorption, the covalently bound 11-cis-retinal is converted to all-trans-retinal. After hydrolysis of the Schiff base and release of the covalently bound all-trans-retinal, active rhodopsin is regenerated by binding of a fresh molecule of 11-cis-retinal.

The protein localises to the membrane. The protein resides in the cell projection. It localises to the cilium. It is found in the photoreceptor outer segment. Its function is as follows. Photoreceptor required for image-forming vision at low light intensity. Required for photoreceptor cell viability after birth. Light-induced isomerization of 11-cis to all-trans retinal triggers a conformational change that activates signaling via G-proteins. Subsequent receptor phosphorylation mediates displacement of the bound G-protein alpha subunit by the arrestin SAG and terminates signaling. The sequence is that of Rhodopsin (RHO) from Canis lupus familiaris (Dog).